We begin with the raw amino-acid sequence, 357 residues long: DNA integrity scanning protein DisA (357 aa).

One can recognise a DAC domain in the interval 8–146; it reads VKSMINILQL…GNLRYTLKDI (139 aa). Residues Gly-75, Leu-93, and 106-110 each bind ATP; that span reads MRHRT.

This sequence belongs to the DisA family. As to quaternary structure, homooctamer. The cofactor is Mg(2+).

The catalysed reaction is 2 ATP = 3',3'-c-di-AMP + 2 diphosphate. Participates in a DNA-damage check-point that is active prior to asymmetric division when DNA is damaged. DisA forms globular foci that rapidly scan along the chromosomes during sporulation, searching for lesions. When a lesion is present, DisA pauses at the lesion site. This triggers a cellular response that culminates in a temporary block in sporulation initiation. Its function is as follows. Also has diadenylate cyclase activity, catalyzing the condensation of 2 ATP molecules into cyclic di-AMP (c-di-AMP). c-di-AMP acts as a signaling molecule that couples DNA integrity with progression of sporulation. The rise in c-di-AMP level generated by DisA while scanning the chromosome, operates as a positive signal that advances sporulation; upon encountering a lesion, the DisA focus arrests at the damaged site and halts c-di-AMP synthesis. The polypeptide is DNA integrity scanning protein DisA (Bacillus anthracis (strain CDC 684 / NRRL 3495)).